The following is a 139-amino-acid chain: Large ribosomal subunit protein bL17 (139 aa).

This sequence belongs to the bacterial ribosomal protein bL17 family. As to quaternary structure, part of the 50S ribosomal subunit. Contacts protein L32.

In Cereibacter sphaeroides (strain ATCC 17029 / ATH 2.4.9) (Rhodobacter sphaeroides), this protein is Large ribosomal subunit protein bL17.